A 238-amino-acid chain; its full sequence is Dolichyldiphosphatase 1 (238 aa).

The next 4 membrane-spanning stretches (helical) occupy residues 33-53, 100-120, 130-150, and 162-182; these read LAYL…LIIF, PSSH…FLYL, FLDL…AFLV, and WSQV…WFIF.

Belongs to the dolichyldiphosphatase family.

Its subcellular location is the endoplasmic reticulum membrane. The catalysed reaction is a di-trans,poly-cis-dolichyl diphosphate + H2O = a di-trans,poly-cis-dolichyl phosphate + phosphate + H(+). It functions in the pathway protein modification; protein glycosylation. Required for efficient N-glycosylation. Necessary for maintaining optimal levels of dolichol-linked oligosaccharides. Hydrolyzes dolichyl pyrophosphate at a very high rate and dolichyl monophosphate at a much lower rate. Does not act on phosphatidate. The sequence is that of Dolichyldiphosphatase 1 (DOLPP1) from Homo sapiens (Human).